The sequence spans 1505 residues: G patch domain-containing protein 8 (1505 aa).

A G-patch domain is found at 40 to 86 (SDNIGHRLLQKHGWKLGQGLGKSLQGRTDPIPIVVKYDVMGMGRMEM). The stretch at 89 to 124 (DYAEDATERRRVLEVEKEDTEELRQKYKDYVDKEKA) forms a coiled coil. The C2H2-type zinc-finger motif lies at 136–160 (FYCELCDKQYQKHQEFDNHINSYDH). 2 stretches are compositionally biased toward basic and acidic residues: residues 166–175 (LKDLKQREFA) and 182–206 (SRKD…RKQA). The disordered stretch occupies residues 166–244 (LKDLKQREFA…SSTNSGASAV (79 aa)). Residues 223–233 (VDEDGGEEDKD) show a composition bias toward acidic residues. Lysine 311 participates in a covalent cross-link: Glycyl lysine isopeptide (Lys-Gly) (interchain with G-Cter in SUMO2). Basic and acidic residues-rich tracts occupy residues 322-339 (HAEE…EKSS) and 421-436 (EGDH…ENRK). Disordered stretches follow at residues 322–393 (HAEE…EPEY) and 419–537 (QMEG…FPVL). Residues 437–449 (SSSPKPQGCSKTA) are compositionally biased toward polar residues. Lysine 479 is modified (N6-acetyllysine). Lysine 573 participates in a covalent cross-link: Glycyl lysine isopeptide (Lys-Gly) (interchain with G-Cter in SUMO2). Composition is skewed to basic and acidic residues over residues 575–612 (SRNK…KSQE) and 648–665 (SETE…EPSG). Residues 575–1304 (SRNKDAKAKG…ESTDGTEDAS (730 aa)) are disordered. A Phosphoserine modification is found at serine 648. Residues 666–687 (KSHRHKKKKKHKKSSKHKRKHK) are compositionally biased toward basic residues. Basic and acidic residues predominate over residues 688–702 (ADTEEKSSKAESGEK). Basic residues predominate over residues 703–715 (SKKRKKRKRKKNK). Phosphoserine occurs at positions 733, 735, and 753. The span at 745–767 (AQDDSQRRSLPAEEGNSGKKDDG) shows a compositional bias: basic and acidic residues. Positions 794–804 (ANTKHSSRSSH) are enriched in basic residues. Positions 832-849 (SEEEEEEEEEEEEEDEDS) are enriched in acidic residues. The segment covering 856–871 (SRSRSGHRHSSHRSSR) has biased composition (basic residues). The segment covering 872 to 900 (RSYSSSSDASSDQSCYSRQHSYSDDSYSD) has biased composition (low complexity). A phosphoserine mark is found at serine 915 and serine 918. Over residues 923–932 (SKHRSKRHKY) the composition is skewed to basic residues. A phosphoserine mark is found at serine 985, serine 1013, serine 1018, serine 1037, and serine 1039. Positions 1017–1031 (ESPEERRSGRRDFIR) are enriched in basic and acidic residues. Over residues 1050-1063 (GPGKKEDGRGDDSK) the composition is skewed to basic and acidic residues. Residue serine 1085 is modified to Phosphoserine. Composition is skewed to basic and acidic residues over residues 1097-1112 (LLEK…KPNV), 1163-1185 (KKCE…EEGS), and 1211-1220 (EEPKSEEATA). Lysine 1109 participates in a covalent cross-link: Glycyl lysine isopeptide (Lys-Gly) (interchain with G-Cter in SUMO2). The residue at position 1179 (serine 1179) is a Phosphoserine.

This chain is G patch domain-containing protein 8 (Gpatch8), found in Mus musculus (Mouse).